The sequence spans 213 residues: Homeobox protein koza (213 aa).

The segment at 24–72 (ILSHMGPGSKEKSLGFPKTDQDQDSSLRDTEEKYASEKLQSSSQPAEIH) is disordered. Basic and acidic residues predominate over residues 32-59 (SKEKSLGFPKTDQDQDSSLRDTEEKYAS). Positions 102-161 (QKRSRAAFSHSQVIELERKFSSQKYLSAPERAQLAKSLKLTETQVKIWFQNRRYKTKRKQ) form a DNA-binding region, homeobox.

This sequence belongs to the NK-3 homeobox family. As to expression, expressed in the muscle layer of embryonic somites. In tailbud embryos, expressed throughout the entire myotome but at the mid-tailbud stage (stage 32), expression becomes restricted to the outer periphery of the somite so that by the tadpole stage only the outer, type I cells show expression. Also expressed in the dorsal cement gland and in the myocardial layer of the developing heart. In all tissues, expression begins after terminal differentiation.

It is found in the nucleus. Functionally, may regulate cell proliferation in a tissue-specific manner. In Xenopus laevis (African clawed frog), this protein is Homeobox protein koza.